The chain runs to 804 residues: SH3-containing GRB2-like protein 3-interacting protein 1 (804 aa).

Disordered regions lie at residues 1–90 (MMEG…EESH), 124–181 (LSPS…GPPL), and 199–254 (IWGS…QSAT). Residues 16 to 34 (RKKEKDTDSTGSPDRDGIK) show a composition bias toward basic and acidic residues. 8 positions are modified to phosphoserine: serine 54, serine 80, serine 81, serine 83, serine 125, serine 127, serine 132, and serine 145. Phosphothreonine is present on residues threonine 156 and threonine 158. Position 212 is a phosphoserine (serine 212). Over residues 221–236 (TGTPPPLPPKNVPATP) the composition is skewed to pro residues. Residues threonine 223 and threonine 235 each carry the phosphothreonine modification. 5 positions are modified to phosphoserine: serine 241, serine 263, serine 276, serine 292, and serine 295. A compositionally biased stretch (basic and acidic residues) spans 289–309 (VHFSDTSPEHVTPELTPREKV). Positions 289 to 500 (VHFSDTSPEH…LSAATTPTVE (212 aa)) are disordered. Residues threonine 300 and threonine 304 each carry the phosphothreonine modification. The segment covering 322–346 (SPAPGPLGPPGPTGPPGPPGPPRNV) has biased composition (pro residues). Serine 348 is subject to Phosphoserine. A compositionally biased stretch (basic and acidic residues) spans 354-369 (EVQKKVAEQTFIKDDY). Serine 375 carries the post-translational modification Phosphoserine. Threonine 386 carries the post-translational modification Phosphothreonine. The segment covering 413-432 (TSGASSPARPATPLLPCSST) has biased composition (low complexity). Residues 433 to 451 (TPPPPPPRPPSRPKLPPGK) show a composition bias toward pro residues. Low complexity-rich tracts occupy residues 458-468 (SRPFSPPIHSS) and 475-498 (PLARAESTSSISSTNSLSAATTPT). Position 462 is a phosphoserine (serine 462). An MHD domain is found at 535–803 (TLPVAAAFTE…RFAAGKYLAD (269 aa)). Interaction with DPF motifs-containing proteins stretches follow at residues 537 to 543 (PVAAAFT), 569 to 571 (SFP), 643 to 646 (TYYN), and 789 to 794 (SLIKKR). A necessary and sufficient to mediate interaction with CANX region spans residues 625–804 (MPNLMTHLKK…FAAGKYLADN (180 aa)).

Interacts with proteins essential or regulating the formation of functional clathrin-coated pits. Interacts with CANX. Interacts with AP2A1. Interacts with EPS15. Interacts with SH3GL3. Interacts with AMPH. Interacts with ITSN1 (via SH3 domains). Interacts with and REPS1.

The protein resides in the membrane. Its subcellular location is the clathrin-coated pit. Functionally, may function in clathrin-mediated endocytosis. Has both a membrane binding/tubulating activity and the ability to recruit proteins essential to the formation of functional clathrin-coated pits. Has a preference for membranes enriched in phosphatidylserine and phosphoinositides and is required for the endocytosis of the transferrin receptor. May also bind tubulin. May play a role in the regulation of energy homeostasis. This is SH3-containing GRB2-like protein 3-interacting protein 1 (SGIP1) from Pongo abelii (Sumatran orangutan).